The primary structure comprises 369 residues: Phospho-N-acetylmuramoyl-pentapeptide-transferase (369 aa).

A run of 10 helical transmembrane segments spans residues A30–L50, L73–A93, Y99–Y119, V140–L160, L171–S191, G202–T222, G239–F259, I266–L286, L291–V311, and K346–L366.

The protein belongs to the glycosyltransferase 4 family. MraY subfamily. The cofactor is Mg(2+).

The protein resides in the cell inner membrane. It catalyses the reaction UDP-N-acetyl-alpha-D-muramoyl-L-alanyl-gamma-D-glutamyl-meso-2,6-diaminopimeloyl-D-alanyl-D-alanine + di-trans,octa-cis-undecaprenyl phosphate = di-trans,octa-cis-undecaprenyl diphospho-N-acetyl-alpha-D-muramoyl-L-alanyl-D-glutamyl-meso-2,6-diaminopimeloyl-D-alanyl-D-alanine + UMP. Its pathway is cell wall biogenesis; peptidoglycan biosynthesis. Catalyzes the initial step of the lipid cycle reactions in the biosynthesis of the cell wall peptidoglycan: transfers peptidoglycan precursor phospho-MurNAc-pentapeptide from UDP-MurNAc-pentapeptide onto the lipid carrier undecaprenyl phosphate, yielding undecaprenyl-pyrophosphoryl-MurNAc-pentapeptide, known as lipid I. This is Phospho-N-acetylmuramoyl-pentapeptide-transferase from Chlorobium phaeobacteroides (strain BS1).